Reading from the N-terminus, the 67-residue chain is uncharacterized protein (67 aa).

The helical transmembrane segment at 19 to 39 (ISFIIFFFFYFFFFYFFYGFW) threads the bilayer.

Its subcellular location is the membrane. This is an uncharacterized protein from Dictyostelium discoideum (Social amoeba).